The primary structure comprises 282 residues: Phosphatidylserine decarboxylase proenzyme (282 aa).

Active-site charge relay system; for autoendoproteolytic cleavage activity residues include Asp88, His144, and Ser247. Ser247 serves as the catalytic Schiff-base intermediate with substrate; via pyruvic acid; for decarboxylase activity. Ser247 is subject to Pyruvic acid (Ser); by autocatalysis.

This sequence belongs to the phosphatidylserine decarboxylase family. PSD-B subfamily. Prokaryotic type I sub-subfamily. As to quaternary structure, heterodimer of a large membrane-associated beta subunit and a small pyruvoyl-containing alpha subunit. Requires pyruvate as cofactor. In terms of processing, is synthesized initially as an inactive proenzyme. Formation of the active enzyme involves a self-maturation process in which the active site pyruvoyl group is generated from an internal serine residue via an autocatalytic post-translational modification. Two non-identical subunits are generated from the proenzyme in this reaction, and the pyruvate is formed at the N-terminus of the alpha chain, which is derived from the carboxyl end of the proenzyme. The autoendoproteolytic cleavage occurs by a canonical serine protease mechanism, in which the side chain hydroxyl group of the serine supplies its oxygen atom to form the C-terminus of the beta chain, while the remainder of the serine residue undergoes an oxidative deamination to produce ammonia and the pyruvoyl prosthetic group on the alpha chain. During this reaction, the Ser that is part of the protease active site of the proenzyme becomes the pyruvoyl prosthetic group, which constitutes an essential element of the active site of the mature decarboxylase.

Its subcellular location is the cell membrane. It carries out the reaction a 1,2-diacyl-sn-glycero-3-phospho-L-serine + H(+) = a 1,2-diacyl-sn-glycero-3-phosphoethanolamine + CO2. The protein operates within phospholipid metabolism; phosphatidylethanolamine biosynthesis; phosphatidylethanolamine from CDP-diacylglycerol: step 2/2. Catalyzes the formation of phosphatidylethanolamine (PtdEtn) from phosphatidylserine (PtdSer). The protein is Phosphatidylserine decarboxylase proenzyme of Xanthomonas campestris pv. campestris (strain B100).